Reading from the N-terminus, the 352-residue chain is Ion-translocating oxidoreductase complex subunit D (352 aa).

5 consecutive transmembrane segments (helical) span residues 20–40 (IMLLVLLAAVPGIAAQLWFFG), 42–62 (GTLVQILLASVSALLAEALVL), 78–109 (ALLTGLLLAVSIPPLAPWWMVVLGTVFAVIIA), 123–143 (PAMIGYVVLLISFPVQMTSWL), and 148–168 (IAVNIPGFIDAIQVIFSGHIT). At Thr-187 the chain carries FMN phosphoryl threonine. A run of 5 helical transmembrane segments spans residues 215–235 (LAGVGWQWVNLAWLAGGVWLL), 242–262 (WHIPLSFLVTLALCATLGWLF), 267–287 (LAAPQIHLLSGATMLGAFFIL), 301–321 (LIFGALAGLLVWLIRSFGGYP), and 322–342 (DGVAFAVLLANITVPLIDYYT).

The protein belongs to the NqrB/RnfD family. The complex is composed of six subunits: RsxA, RsxB, RsxC, RsxD, RsxE and RsxG. It depends on FMN as a cofactor.

The protein localises to the cell inner membrane. Functionally, part of a membrane-bound complex that couples electron transfer with translocation of ions across the membrane. Required to maintain the reduced state of SoxR. The chain is Ion-translocating oxidoreductase complex subunit D from Escherichia coli (strain SMS-3-5 / SECEC).